The chain runs to 763 residues: Thyrotropin receptor (763 aa).

The N-terminal stretch at 1–21 (MRQTPLLQLALLLSLPRSLGG) is a signal peptide. The Extracellular segment spans residues 22–412 (KGCPSPPCEC…EFNPCEDIMG (391 aa)). C31 and C41 are joined by a disulfide. N-linked (GlcNAc...) asparagine glycosylation is found at N77 and N99. LRR repeat units lie at residues 100–124 (LSKMTHIEIRNTRSLTYIDPGALKE), 125–150 (LPLLKFLGIFNTGLGVFPDLTKVYST), 151–174 (DVFFILEITDNPYMTSIPANAFQG), 176–199 (CNETLTLKLYNNGFTSIQGHAFNG), 201–223 (KLDAVYLNKNKYLTAIDQDAFGG), 225–248 (YSGPTLLDVSYTSVTALPSKGLEH), and 264–288 (PLTLSFLHLTRADLSYPSHCCAFKN). N177 and N198 each carry an N-linked (GlcNAc...) asparagine glycan. The N-linked (GlcNAc...) asparagine glycan is linked to N302. Y384 is modified (sulfotyrosine). Residues 413 to 440 (YKFLRIVVWFVSLLALLGNVFVLIILLT) traverse the membrane as a helical segment. Topologically, residues 441–449 (SHYKLTVPR) are cytoplasmic. Residues 450-472 (FLMCNLAFADFCMGMYLLLIASV) form a helical membrane-spanning segment. Over 473–493 (DLYTHSEYYNHAIDWQTGPGC) the chain is Extracellular. Residues C493 and C568 are joined by a disulfide bond. Residues 494 to 516 (NAAGFFTVFASELSVYTLTVITL) traverse the membrane as a helical segment. The Cytoplasmic portion of the chain corresponds to 517–536 (ERWYAITFAMRLDRKMRLRH). Residues 537–559 (AYAIMVGGWVCCFLLALLPLVGI) form a helical membrane-spanning segment. The Extracellular portion of the chain corresponds to 560 to 579 (SSYAKVSICLPMDTETPLAL). A helical membrane pass occupies residues 580–601 (AYIILVLLLNIVAFIIVCSCYV). At 602 to 624 (KIYITVRNPQYNTGDKDTKIAKR) the chain is on the cytoplasmic side. A helical membrane pass occupies residues 625–648 (MAVLIFTDFMCMAPISFYALSALM). At 649 to 659 (NKPLITVTNSK) the chain is on the extracellular side. Residues 660–681 (ILLVLFYPLNSCANPFLYAIFT) traverse the membrane as a helical segment. The Cytoplasmic portion of the chain corresponds to 682-763 (KTFQRDVFIL…ISKEYNQTVL (82 aa)). The PDZ-binding motif lies at 761–763 (TVL).

The protein belongs to the G-protein coupled receptor 1 family. FSH/LSH/TSH subfamily. As to quaternary structure, interacts with heterodimer GPHA2:GPHB5; this interaction stimulates cAMP production. Interacts (via the PDZ-binding motif) with SCRIB; regulates TSHR trafficking and function. Post-translationally, glycosylated. In terms of processing, sulfated. Sulfation on Tyr-384 plays a role in thyrotropin receptor binding and activation.

Its subcellular location is the cell membrane. It is found in the basolateral cell membrane. Receptor for the thyroid-stimulating hormone (TSH) or thyrotropin. Also acts as a receptor for the heterodimeric glycoprotein hormone (GPHA2:GPHB5) or thyrostimulin. The activity of this receptor is mediated by G proteins which activate adenylate cyclase. Plays a central role in controlling thyroid cell metabolism. This Felis catus (Cat) protein is Thyrotropin receptor (TSHR).